A 557-amino-acid chain; its full sequence is Potassium-transporting ATPase potassium-binding subunit (557 aa).

The next 10 helical transmembrane spans lie at 4-24 (LGAGLLQAGLLLLLLAAVHVP), 61-81 (TYALSVLGFSTVSILFLYAFL), 131-151 (GLTVQNFLSAAVGLAVAVALV), 174-194 (LRVLLPLAFAGAVLLLLTGVV), 253-273 (LEVFLILVIPFSLPRAFGTLV), 280-300 (LAVLSVMGTIFGASLALTTWA), 375-395 (GLYGMLVLAVITVFVAGLMVG), 412-432 (CAALYVLVTPAVLLTGTAVAL), 483-503 (LAIWLGRFLPMVLVLALAGAF), and 528-548 (LAVVVVVSALTFFPALALGPI).

This sequence belongs to the KdpA family. As to quaternary structure, the system is composed of three essential subunits: KdpA, KdpB and KdpC.

Its subcellular location is the cell membrane. Its function is as follows. Part of the high-affinity ATP-driven potassium transport (or Kdp) system, which catalyzes the hydrolysis of ATP coupled with the electrogenic transport of potassium into the cytoplasm. This subunit binds the extracellular potassium ions and delivers the ions to the membrane domain of KdpB through an intramembrane tunnel. This is Potassium-transporting ATPase potassium-binding subunit from Kineococcus radiotolerans (strain ATCC BAA-149 / DSM 14245 / SRS30216).